The chain runs to 354 residues: MSEVNLKGRKVTVHDMCLRDGMHAKREQMSIEQMVTIATALDEAGVPYIQVTHGAGLGGNSLQHGFAPHSNEAYLAAVCGAVKQTKVSVLLLPGLGTMRELQSAYDCGARSVHVATHCTEADTSPQHIAFARKLGMDSTGFLMMAHLNTPEGLAQQGKLMESYGAQTVYITDSAGYMLPGDVKARVSALRDVLKPETEIGFHGHHNMGMGIANSIAAIEAGASRIDASVGGLGAGAGNTPLEAFVAVCERMGIETGCDLFKLMDMAEDIIFPIMDHIVRVDRSSLTLGFAGVYSTFLLHTNRVSQRFGIPARDILVELGRKKMIGGQEDMIIDTAMTMAKERGLLKDATAGVAP.

The 253-residue stretch at 11–263 folds into the Pyruvate carboxyltransferase domain; sequence VTVHDMCLRD…ETGCDLFKLM (253 aa). 19–20 serves as a coordination point for substrate; that stretch reads RD. Aspartate 20 is a binding site for Mn(2+). The Proton acceptor role is filled by histidine 23. Positions 173 and 202 each coordinate substrate. Mn(2+) is bound by residues histidine 202 and histidine 204. Tyrosine 293 is a binding site for substrate.

Belongs to the 4-hydroxy-2-oxovalerate aldolase family.

It carries out the reaction (S)-4-hydroxy-2-oxopentanoate = acetaldehyde + pyruvate. The sequence is that of 4-hydroxy-2-oxovalerate aldolase 5 from Dechloromonas aromatica (strain RCB).